The chain runs to 214 residues: Epoxide hydrolase EphH (214 aa).

Catalysis depends on Ser28, which acts as the Nucleophile. Residues Asp156 and His186 each act as charge relay system in the active site.

It belongs to the AB hydrolase superfamily.

The catalysed reaction is an epoxide + H2O = an ethanediol. Its activity is regulated as follows. Inhibited by AUDA, a known epoxide hydrolase inhibitor. Its function is as follows. Catalyzes the hydrolysis of epoxide-containing substrates. In vitro, catalyzes the hydrolysis of the synthetic compounds PHOME and styrene oxide. Plays an essential role in subverting phagosomal acidification. Plays a major role in the survival of M.tuberculosis (Mtb) during in vitro acidic stress and protects Mtb in response to phagosomal acidification inside macrophages. Also supports Mtb growth under the nutrient-deprived condition at pH 7.0. The protein is Epoxide hydrolase EphH of Mycobacterium tuberculosis (strain ATCC 25618 / H37Rv).